Consider the following 89-residue polypeptide: UPF0223 protein BPUM_1362 (89 aa).

The protein belongs to the UPF0223 family.

In Bacillus pumilus (strain SAFR-032), this protein is UPF0223 protein BPUM_1362.